The following is a 162-amino-acid chain: Ecotin (162 aa).

The N-terminal stretch at 1-18 (MFVPAVVFAALASTSAWA) is a signal peptide. Residues C70 and C107 are joined by a disulfide bond.

The protein belongs to the protease inhibitor I11 (ecotin) family. In terms of assembly, homodimer.

The protein localises to the periplasm. General inhibitor of pancreatic serine proteases: inhibits chymotrypsin, trypsin, elastases, factor X, kallikrein as well as a variety of other proteases. This Salmonella choleraesuis (strain SC-B67) protein is Ecotin.